Consider the following 255-residue polypeptide: Acetylglutamate kinase (255 aa).

Substrate contacts are provided by residues 40-41 (GG), Arg-62, and Asn-153.

It belongs to the acetylglutamate kinase family. ArgB subfamily.

Its subcellular location is the cytoplasm. It catalyses the reaction N-acetyl-L-glutamate + ATP = N-acetyl-L-glutamyl 5-phosphate + ADP. It participates in amino-acid biosynthesis; L-arginine biosynthesis; N(2)-acetyl-L-ornithine from L-glutamate: step 2/4. Catalyzes the ATP-dependent phosphorylation of N-acetyl-L-glutamate. This Bacillus mycoides (strain KBAB4) (Bacillus weihenstephanensis) protein is Acetylglutamate kinase.